A 587-amino-acid polypeptide reads, in one-letter code: Probable phosphoribomutase (587 aa).

Residues Thr49, Arg53, and 149–150 contribute to the substrate site; that span reads SH. Residue Ser149 is the Phosphoserine intermediate of the active site. Mg(2+) is bound by residues Ser149, Asp306, Asp308, and Asp310. At Ser149 the chain carries Phosphoserine. Residues 310-311, Thr380, 404-406, and Lys418 contribute to the substrate site; these read DR and EEA.

It belongs to the phosphohexose mutase family. It depends on Mg(2+) as a cofactor.

The protein localises to the cytoplasm. It is found in the nucleus. It carries out the reaction alpha-D-ribose 1-phosphate = D-ribose 5-phosphate. Functionally, converts ribose 1-phosphate to ribose 5-phosphate. Involved in ribose salvage via the pentose phosphate pathway. The polypeptide is Probable phosphoribomutase (Schizosaccharomyces pombe (strain 972 / ATCC 24843) (Fission yeast)).